Here is a 303-residue protein sequence, read N- to C-terminus: Probable porphobilinogen deaminase (303 aa).

C233 carries the post-translational modification S-(dipyrrolylmethanemethyl)cysteine.

The protein belongs to the HMBS family. Dipyrromethane is required as a cofactor.

The enzyme catalyses 4 porphobilinogen + H2O = hydroxymethylbilane + 4 NH4(+). Its pathway is porphyrin-containing compound metabolism; protoporphyrin-IX biosynthesis; coproporphyrinogen-III from 5-aminolevulinate: step 2/4. In terms of biological role, tetrapolymerization of the monopyrrole PBG into the hydroxymethylbilane pre-uroporphyrinogen in several discrete steps. This Methanocella arvoryzae (strain DSM 22066 / NBRC 105507 / MRE50) protein is Probable porphobilinogen deaminase.